The sequence spans 332 residues: MRIGSYQLKNRIFLAPMAGITDQPFRRICTHYGAGLTFSEMMSTNPQVWHTEKSKLRLAHHQEAGINAVQIAGCDPDEMAKAAQINVEYGAEIIDINMGCPAKKVNRKMAGSALLQYPDLVKQILNKVVKSVTVPVTLKIRTGWDKDNRNCLEIAKIAEQCGIQALTIHGRTRSCMFEGEAEYDNIKAVKEQLSIPIIANGDITSAEKAKYVLDYTNADAIMIGRGSLGNPWLFRVMESLIEKDSIVLEPSLNEKCNVILQHIQELHQFYGVEKGCRIARKHVAWYLQGIQPNPVFRQAFNAITDPKEQLIALEGFFNLILMDKEKNVRTTT.

FMN-binding positions include 16–18 (PMA) and Q70. C100 functions as the Proton donor in the catalytic mechanism. FMN is bound by residues K139, 200-202 (NGD), and 224-225 (GR).

It belongs to the Dus family. DusB subfamily. FMN serves as cofactor.

It catalyses the reaction a 5,6-dihydrouridine in tRNA + NAD(+) = a uridine in tRNA + NADH + H(+). The catalysed reaction is a 5,6-dihydrouridine in tRNA + NADP(+) = a uridine in tRNA + NADPH + H(+). In terms of biological role, catalyzes the synthesis of 5,6-dihydrouridine (D), a modified base found in the D-loop of most tRNAs, via the reduction of the C5-C6 double bond in target uridines. This is tRNA-dihydrouridine synthase B from Pasteurella multocida (strain Pm70).